The sequence spans 287 residues: Elongation factor Ts (287 aa).

The involved in Mg(2+) ion dislocation from EF-Tu stretch occupies residues 80–83 (TDFL).

Belongs to the EF-Ts family.

It localises to the cytoplasm. Associates with the EF-Tu.GDP complex and induces the exchange of GDP to GTP. It remains bound to the aminoacyl-tRNA.EF-Tu.GTP complex up to the GTP hydrolysis stage on the ribosome. The protein is Elongation factor Ts of Pseudomonas putida (strain W619).